A 235-amino-acid chain; its full sequence is ATP synthase subunit a (235 aa).

A run of 5 helical transmembrane segments spans residues 17–37 (TTNI…LYGM), 76–96 (SFFA…GLIF), 113–133 (PVVT…AGVA), 179–201 (LLMS…PGLF), and 211–230 (VFIG…VYIS).

This sequence belongs to the ATPase A chain family. In terms of assembly, F-type ATPases have 2 components, CF(1) - the catalytic core - and CF(0) - the membrane proton channel. CF(1) has five subunits: alpha(3), beta(3), gamma(1), delta(1), epsilon(1). CF(0) has three main subunits: a(1), b(2) and c(9-12). The alpha and beta chains form an alternating ring which encloses part of the gamma chain. CF(1) is attached to CF(0) by a central stalk formed by the gamma and epsilon chains, while a peripheral stalk is formed by the delta and b chains.

The protein resides in the cell membrane. In terms of biological role, key component of the proton channel; it plays a direct role in the translocation of protons across the membrane. This chain is ATP synthase subunit a, found in Limosilactobacillus reuteri subsp. reuteri (strain JCM 1112) (Lactobacillus reuteri).